Reading from the N-terminus, the 64-residue chain is Large ribosomal subunit protein bL33 (64 aa).

It belongs to the bacterial ribosomal protein bL33 family.

This chain is Large ribosomal subunit protein bL33, found in Parasynechococcus marenigrum (strain WH8102).